The following is a 435-amino-acid chain: DEAD-box ATP-dependent RNA helicase CshB (435 aa).

A Q motif motif is present at residues 5-33; the sequence is SRFDQFGFQPFIGLAIDKLGFYEPTEVQQ. Residues 36–208 form the Helicase ATP-binding domain; that stretch reads IPGILKGESI…SKYMENPRYE (173 aa). 49 to 56 serves as a coordination point for ATP; it reads SQTGTGKT. Positions 156 to 159 match the DEAD box motif; the sequence is DEAD. The 144-residue stretch at 235–378 folds into the Helicase C-terminal domain; the sequence is LLKNVLVGSQ…HVDWKNKEFV (144 aa). The disordered stretch occupies residues 383-435; it reads RNRRAKREAKRETADPREIGMRKKAKQKGKPNYKKKINYKMNEIKRRERRKKR. A compositionally biased stretch (basic and acidic residues) spans 391-403; the sequence is AKRETADPREIGM. A compositionally biased stretch (basic residues) spans 404–420; it reads RKKAKQKGKPNYKKKIN.

It belongs to the DEAD box helicase family. CshB subfamily.

It localises to the cytoplasm. The catalysed reaction is ATP + H2O = ADP + phosphate + H(+). Its function is as follows. DEAD-box RNA helicase involved in cold tolerance, motility, and tolerance to heat, alkali and oxidative stress. The sequence is that of DEAD-box ATP-dependent RNA helicase CshB from Listeria monocytogenes serovar 1/2a (strain ATCC BAA-679 / EGD-e).